The chain runs to 302 residues: N-acetylmuramic acid 6-phosphate etherase (302 aa).

Positions 55 to 218 (AYPKFDQGGR…STGIMVKSGK (164 aa)) constitute an SIS domain. Glu83 acts as the Proton donor in catalysis. The active site involves Glu114.

Belongs to the GCKR-like family. MurNAc-6-P etherase subfamily. As to quaternary structure, homodimer.

The enzyme catalyses N-acetyl-D-muramate 6-phosphate + H2O = N-acetyl-D-glucosamine 6-phosphate + (R)-lactate. It participates in amino-sugar metabolism; N-acetylmuramate degradation. Its function is as follows. Specifically catalyzes the cleavage of the D-lactyl ether substituent of MurNAc 6-phosphate, producing GlcNAc 6-phosphate and D-lactate. This is N-acetylmuramic acid 6-phosphate etherase from Levilactobacillus brevis (strain ATCC 367 / BCRC 12310 / CIP 105137 / JCM 1170 / LMG 11437 / NCIMB 947 / NCTC 947) (Lactobacillus brevis).